Reading from the N-terminus, the 355-residue chain is UDP-N-acetylglucosamine--N-acetylmuramyl-(pentapeptide) pyrophosphoryl-undecaprenol N-acetylglucosamine transferase (355 aa).

UDP-N-acetyl-alpha-D-glucosamine contacts are provided by residues 15–17 (TGG), N127, R163, S191, I244, 263–268 (ALTVSE), and Q288.

It belongs to the glycosyltransferase 28 family. MurG subfamily.

The protein localises to the cell inner membrane. It carries out the reaction di-trans,octa-cis-undecaprenyl diphospho-N-acetyl-alpha-D-muramoyl-L-alanyl-D-glutamyl-meso-2,6-diaminopimeloyl-D-alanyl-D-alanine + UDP-N-acetyl-alpha-D-glucosamine = di-trans,octa-cis-undecaprenyl diphospho-[N-acetyl-alpha-D-glucosaminyl-(1-&gt;4)]-N-acetyl-alpha-D-muramoyl-L-alanyl-D-glutamyl-meso-2,6-diaminopimeloyl-D-alanyl-D-alanine + UDP + H(+). It participates in cell wall biogenesis; peptidoglycan biosynthesis. Cell wall formation. Catalyzes the transfer of a GlcNAc subunit on undecaprenyl-pyrophosphoryl-MurNAc-pentapeptide (lipid intermediate I) to form undecaprenyl-pyrophosphoryl-MurNAc-(pentapeptide)GlcNAc (lipid intermediate II). This chain is UDP-N-acetylglucosamine--N-acetylmuramyl-(pentapeptide) pyrophosphoryl-undecaprenol N-acetylglucosamine transferase, found in Cronobacter sakazakii (strain ATCC BAA-894) (Enterobacter sakazakii).